Consider the following 707-residue polypeptide: DNA ligase (707 aa).

Positions 1–23 are disordered; the sequence is MSSKATQDPEAVLAEQSDDATEA. NAD(+) contacts are provided by residues 53 to 57, 103 to 104, and Glu-133; these read DAEFD and SL. Residue Lys-135 is the N6-AMP-lysine intermediate of the active site. Residues Arg-156, Glu-196, Lys-315, and Lys-339 each contribute to the NAD(+) site. 4 residues coordinate Zn(2+): Cys-433, Cys-436, Cys-452, and Cys-458. A BRCT domain is found at 622 to 707; the sequence is SIERTLDGLS…LENGPDTPDS (86 aa).

This sequence belongs to the NAD-dependent DNA ligase family. LigA subfamily. Requires Mg(2+) as cofactor. Mn(2+) serves as cofactor.

The enzyme catalyses NAD(+) + (deoxyribonucleotide)n-3'-hydroxyl + 5'-phospho-(deoxyribonucleotide)m = (deoxyribonucleotide)n+m + AMP + beta-nicotinamide D-nucleotide.. Functionally, DNA ligase that catalyzes the formation of phosphodiester linkages between 5'-phosphoryl and 3'-hydroxyl groups in double-stranded DNA using NAD as a coenzyme and as the energy source for the reaction. It is essential for DNA replication and repair of damaged DNA. The polypeptide is DNA ligase (Mycolicibacterium vanbaalenii (strain DSM 7251 / JCM 13017 / BCRC 16820 / KCTC 9966 / NRRL B-24157 / PYR-1) (Mycobacterium vanbaalenii)).